Here is a 133-residue protein sequence, read N- to C-terminus: ATP synthase epsilon chain, chloroplastic (133 aa).

Belongs to the ATPase epsilon chain family. As to quaternary structure, F-type ATPases have 2 components, CF(1) - the catalytic core - and CF(0) - the membrane proton channel. CF(1) has five subunits: alpha(3), beta(3), gamma(1), delta(1), epsilon(1). CF(0) has three main subunits: a, b and c.

The protein resides in the plastid. It is found in the chloroplast thylakoid membrane. Produces ATP from ADP in the presence of a proton gradient across the membrane. In Daucus carota (Wild carrot), this protein is ATP synthase epsilon chain, chloroplastic.